The sequence spans 467 residues: ATP-dependent rRNA helicase rrp3 (467 aa).

A disordered region spans residues 1 to 48 (MPGVKKRKVAREAPAPAPAQESDVESSTPEQTQEPEAQEQEQEEGQSK). Residues 48–76 (KTFKELGIIEQLCEACETMGYKAPTPIQR) carry the Q motif motif. Residues 79–250 (IPLALKGRDL…RASLSNPLRV (172 aa)) form the Helicase ATP-binding domain. An ATP-binding site is contributed by 92 to 99 (AETGSGKT). Positions 198–201 (DEAD) match the DEAD box motif. The Helicase C-terminal domain maps to 262 to 422 (TLLQSYLFIP…EYDCPKDEVM (161 aa)). The disordered stretch occupies residues 439-467 (MKDYNEKKGSRGKKFGGKRSRDEMDQEEG).

This sequence belongs to the DEAD box helicase family. DDX47/RRP3 subfamily. In terms of assembly, interacts with the SSU processome.

The protein localises to the nucleus. It carries out the reaction ATP + H2O = ADP + phosphate + H(+). Functionally, ATP-dependent rRNA helicase required for pre-ribosomal RNA processing. Involved in the maturation of the 35S-pre-rRNA and to its cleavage to mature 18S rRNA. This Aspergillus niger (strain ATCC MYA-4892 / CBS 513.88 / FGSC A1513) protein is ATP-dependent rRNA helicase rrp3.